We begin with the raw amino-acid sequence, 457 residues long: Transcription factor PCF7 (457 aa).

Residues 58–84 (STLHYLLQEKERAQQAHEQLQIYQQQQ) adopt a coiled-coil conformation. Positions 95 to 121 (RQPASRGPGGGGGGGDGGGSSGESTPV) are disordered. Gly residues predominate over residues 101-115 (GPGGGGGGGDGGGSS). Residues 140–198 (RKDRHSKVCTARGLRDRRVRLAAHTAIRFYDVQDRLGYDRPSKAVDWLMRNAKAAIDEL) form the TCP domain. Disordered regions lie at residues 199–231 (PDRA…GFGN) and 263–299 (KSLF…SNQQ). The segment covering 212–230 (STEQPEGTEQANSTSYGFG) has biased composition (polar residues). Residues 268 to 278 (SSSTASGAASA) are compositionally biased toward low complexity.

Forms homodimers and heterodimers.

It localises to the nucleus. In terms of biological role, transcription activator. Binds the promoter core sequence 5'-GGNCC-3'. This is Transcription factor PCF7 (PCF7) from Oryza sativa subsp. indica (Rice).